A 680-amino-acid chain; its full sequence is DNA-directed RNA polymerase subunit beta' (680 aa).

Zn(2+) contacts are provided by Cys69, Cys71, Cys87, and Cys90. Positions 489, 491, and 493 each coordinate Mg(2+).

The protein belongs to the RNA polymerase beta' chain family. RpoC1 subfamily. As to quaternary structure, in plastids the minimal PEP RNA polymerase catalytic core is composed of four subunits: alpha, beta, beta', and beta''. When a (nuclear-encoded) sigma factor is associated with the core the holoenzyme is formed, which can initiate transcription. The cofactor is Mg(2+). Requires Zn(2+) as cofactor.

The protein localises to the plastid. Its subcellular location is the chloroplast. It catalyses the reaction RNA(n) + a ribonucleoside 5'-triphosphate = RNA(n+1) + diphosphate. Its function is as follows. DNA-dependent RNA polymerase catalyzes the transcription of DNA into RNA using the four ribonucleoside triphosphates as substrates. This chain is DNA-directed RNA polymerase subunit beta', found in Aethionema cordifolium (Lebanon stonecress).